The chain runs to 898 residues: Alanine--tRNA ligase (898 aa).

Histidine 564, histidine 568, cysteine 682, and histidine 686 together coordinate Zn(2+).

The protein belongs to the class-II aminoacyl-tRNA synthetase family. It depends on Zn(2+) as a cofactor.

The protein localises to the cytoplasm. It carries out the reaction tRNA(Ala) + L-alanine + ATP = L-alanyl-tRNA(Ala) + AMP + diphosphate. Its function is as follows. Catalyzes the attachment of alanine to tRNA(Ala) in a two-step reaction: alanine is first activated by ATP to form Ala-AMP and then transferred to the acceptor end of tRNA(Ala). Also edits incorrectly charged Ser-tRNA(Ala) and Gly-tRNA(Ala) via its editing domain. The chain is Alanine--tRNA ligase from Beijerinckia indica subsp. indica (strain ATCC 9039 / DSM 1715 / NCIMB 8712).